We begin with the raw amino-acid sequence, 186 residues long: Pyridoxal 5'-phosphate synthase subunit PdxT (186 aa).

Residue 46–48 participates in L-glutamine binding; it reads GES. Cys75 serves as the catalytic Nucleophile. L-glutamine-binding positions include Arg101 and 128 to 129; that span reads IR. Residues His165 and Glu167 each act as charge relay system in the active site.

This sequence belongs to the glutaminase PdxT/SNO family. In terms of assembly, in the presence of PdxS, forms a dodecamer of heterodimers. Only shows activity in the heterodimer.

The catalysed reaction is aldehydo-D-ribose 5-phosphate + D-glyceraldehyde 3-phosphate + L-glutamine = pyridoxal 5'-phosphate + L-glutamate + phosphate + 3 H2O + H(+). The enzyme catalyses L-glutamine + H2O = L-glutamate + NH4(+). The protein operates within cofactor biosynthesis; pyridoxal 5'-phosphate biosynthesis. Its function is as follows. Catalyzes the hydrolysis of glutamine to glutamate and ammonia as part of the biosynthesis of pyridoxal 5'-phosphate. The resulting ammonia molecule is channeled to the active site of PdxS. The sequence is that of Pyridoxal 5'-phosphate synthase subunit PdxT from Methanocaldococcus jannaschii (strain ATCC 43067 / DSM 2661 / JAL-1 / JCM 10045 / NBRC 100440) (Methanococcus jannaschii).